Here is a 243-residue protein sequence, read N- to C-terminus: Dirigent protein 16 (243 aa).

Residues 1-24 (MMIKQSPFLLLTTILFTVAVFVAA) form the signal peptide.

The protein belongs to the plant dirigent protein family. In terms of assembly, homodimer.

The protein localises to the secreted. Its subcellular location is the extracellular space. It is found in the apoplast. Functionally, dirigent proteins impart stereoselectivity on the phenoxy radical-coupling reaction, yielding optically active lignans from two molecules of coniferyl alcohol in the biosynthesis of lignans, flavonolignans, and alkaloids and thus plays a central role in plant secondary metabolism. The protein is Dirigent protein 16 (DIR16) of Arabidopsis thaliana (Mouse-ear cress).